The sequence spans 86 residues: MVDLLAKVDYRIVIVAFIVALIIAIVVWTIAYIEYRKLLRQRRIDRLIKRTRERAEDSGNESDGDTEELSTMVDMGNLRLLDVNDL.

Over M1–I12 the chain is Extracellular. A helical transmembrane segment spans residues V13 to I33. Residues E34–L86 lie on the Cytoplasmic side of the membrane. The disordered stretch occupies residues R52–T71. A phosphoserine; by host CK2 mark is found at S58 and S62. A compositionally biased stretch (acidic residues) spans S58–E68.

Belongs to the HIV-1 VPU protein family. In terms of assembly, homopentamer. Interacts with host CD4 and BRTC; these interactions induce proteasomal degradation of CD4. Interacts with host BST2; this interaction leads to the degradation of host BST2. Interacts with host FBXW11. Interacts with host AP1M1; this interaction plays a role in the mistrafficking and subsequent degradation of host BST2. Interacts with host RANBP2; this interaction allows Vpu to down-regulate host BLM sumoylation. Phosphorylated by host CK2. This phosphorylation is necessary for interaction with human BTRC and degradation of CD4.

Its subcellular location is the host membrane. Its activity is regulated as follows. Ion channel activity is inhibited by hexamethylene amiloride in vitro. Enhances virion budding by targeting host CD4 and Tetherin/BST2 to proteasome degradation. Degradation of CD4 prevents any unwanted premature interactions between viral Env and its host receptor CD4 in the endoplasmic reticulum. Degradation of antiretroviral protein Tetherin/BST2 is important for virion budding, as BST2 tethers new viral particles to the host cell membrane. Mechanistically, Vpu bridges either CD4 or BST2 to BTRC, a substrate recognition subunit of the Skp1/Cullin/F-box protein E3 ubiquitin ligase, induces their ubiquitination and subsequent proteasomal degradation. The alteration of the E3 ligase specificity by Vpu seems to promote the degradation of host IKBKB, leading to NF-kappa-B down-regulation and subsequent apoptosis. Acts as a viroporin that forms an oligomeric ion channel in membranes. Modulates the host DNA repair mechanisms to promote degradation of nuclear viral cDNA in cells that are already productively infected in order to suppress immune sensing and proviral hyper-integration (superinfection). Manipulates PML-NBs and modulates SUMOylation of host BLM protein thereby enhancing its DNA-end processing activity toward viral unintegrated linear DNA. Also inhibits RAD52-mediated homologous repair of viral cDNA, preventing the generation of dead-end circular forms of single copies of the long terminal repeat and permitting sustained nucleolytic attack. The sequence is that of Protein Vpu from Homo sapiens (Human).